A 235-amino-acid polypeptide reads, in one-letter code: Ubiquinone/menaquinone biosynthesis C-methyltransferase UbiE (235 aa).

Positions 60 and 81 each coordinate S-adenosyl-L-methionine.

The protein belongs to the class I-like SAM-binding methyltransferase superfamily. MenG/UbiE family.

It catalyses the reaction a 2-demethylmenaquinol + S-adenosyl-L-methionine = a menaquinol + S-adenosyl-L-homocysteine + H(+). It carries out the reaction a 2-methoxy-6-(all-trans-polyprenyl)benzene-1,4-diol + S-adenosyl-L-methionine = a 5-methoxy-2-methyl-3-(all-trans-polyprenyl)benzene-1,4-diol + S-adenosyl-L-homocysteine + H(+). It functions in the pathway quinol/quinone metabolism; menaquinone biosynthesis; menaquinol from 1,4-dihydroxy-2-naphthoate: step 2/2. Its pathway is cofactor biosynthesis; ubiquinone biosynthesis. In terms of biological role, methyltransferase required for the conversion of demethylmenaquinol (DMKH2) to menaquinol (MKH2) and the conversion of 2-polyprenyl-6-methoxy-1,4-benzoquinol (DDMQH2) to 2-polyprenyl-3-methyl-6-methoxy-1,4-benzoquinol (DMQH2). This Geotalea daltonii (strain DSM 22248 / JCM 15807 / FRC-32) (Geobacter daltonii) protein is Ubiquinone/menaquinone biosynthesis C-methyltransferase UbiE.